The primary structure comprises 263 residues: Small ribosomal subunit protein uS2 (263 aa).

Basic and acidic residues predominate over residues 223 to 249; sequence KALREQDGEALANEEKEITDEEKKEVL. A disordered region spans residues 223–263; it reads KALREQDGEALANEEKEITDEEKKEVLDEAMSEEDFGEEQE. Acidic residues predominate over residues 250–263; the sequence is DEAMSEEDFGEEQE.

This sequence belongs to the universal ribosomal protein uS2 family.

This Campylobacter jejuni subsp. jejuni serotype O:6 (strain 81116 / NCTC 11828) protein is Small ribosomal subunit protein uS2.